We begin with the raw amino-acid sequence, 229 residues long: Potassium/proton antiporter CemA (229 aa).

A run of 3 helical transmembrane segments spans residues Phe7–Phe27, Met106–Trp126, and Ile189–Ile209.

The protein belongs to the CemA family.

The protein resides in the plastid membrane. The enzyme catalyses K(+)(in) + H(+)(out) = K(+)(out) + H(+)(in). Its function is as follows. May be involved in proton extrusion. This Cuscuta reflexa (Southern Asian dodder) protein is Potassium/proton antiporter CemA.